Here is a 64-residue protein sequence, read N- to C-terminus: Large ribosomal subunit protein bL35 (64 aa).

This sequence belongs to the bacterial ribosomal protein bL35 family.

This Streptomyces avermitilis (strain ATCC 31267 / DSM 46492 / JCM 5070 / NBRC 14893 / NCIMB 12804 / NRRL 8165 / MA-4680) protein is Large ribosomal subunit protein bL35.